Here is a 1061-residue protein sequence, read N- to C-terminus: MSSENSEYYSDKEEDSVVNNSSLGRSRKSSRLSKSSRLSKSSRPSSAGVVIDETQSEEEESQSSETAESEKSDESDNSQNSQESEDSEDDSVRPSARNTKRKPLGIPSDSEDEEDELEQRALSPSTRMSITGVRPQDLSDDDSEIEYSDEVQEGPTEAPTAEAVVPRYTTQFAGNIQNDLHSTIGAADSEVLDDSSGSDVLILSNKETPIEILSSTDDDATTNKENMSGPPFERPSKSLSPRSSAGASVVKTSKNLSQPTIQAVLKQKTSPAAPRRSRIKSEDQKVVSQVVYDEEMRKLAEKRVQVSDAEKLFEKVAHKLPDKGSQIMKRIDTLRRELAMDEQWISALRVQQSNVPAVRVVKPTLNPPRAPSIDTLDWDELSEAVNEIKPVYTGAQGMATFNNQKALTLESLKDLHVSLEDLPGPEVLAEDPVGLKVSLMNHQKHALAWMSWRERKLPRGGILADDMGLGKTLTMISSVLACKNGQEMSEGKDESSDSDSEDDKNKKRKSVTGWKSKGRKDTRRGGTLVVCPASLLRQWESEVESKVSRQKLTVCVHHGNNRETKGKYLRDYDIVVTTYQIVAREHKSLSAVFGVKWRRIILDEAHVVRNHKSQSSLAVCDLRGKYRWALTGTPIQNKELDVYALLKFLRCSPFDDLHTWKKWIDNKSAGGQNRLNLLMKSLMLRRTKAQLQSDGKLNSLPNKELRLIEISLDKEEMNVYQTVMTYSRTLFAQFLHQRAERETDFNYRSDANKPTYNQIKDPNGAYYKMHEKFARMAGSKKEVKSHDILVLLLRLRQICCHPGLIDAMLDGEESQTMGDHSSDSDTPEIDLLAQLNKLAITDTSTDGQQSVANAGDDGPPLLPDEARIAKASKNLLKRSNPVFNLHRPSSKINMVIQILKTSILKSSDDKAIVVSQWTSVLDILRDHLSKDGVATLSLNGTIPVKNRQDIVNEFNDRNNQKRVLLLSLTAGGVGLNLIGANHLLLLDLHWNPQLEAQAQDRIYRVGQKKNVIIYKFMCVDTVEQRIKGLQDKKLDLADGVLTGAKVSSKLTIDDLKGLFGM.

2 disordered regions span residues 1-163 (MSSE…TAEA) and 212-253 (ILSS…VKTS). Residues 32-46 (LSKSSRLSKSSRPSS) show a composition bias toward low complexity. Phosphoserine is present on residues Ser-108 and Ser-110. Residues 138–152 (LSDDDSEIEYSDEVQ) are compositionally biased toward acidic residues. A phosphoserine mark is found at Ser-214 and Ser-215. Phosphothreonine is present on Thr-216. Polar residues predominate over residues 237-253 (KSLSPRSSAGASVVKTS). The region spanning 452 to 652 (WRERKLPRGG…YALLKFLRCS (201 aa)) is the Helicase ATP-binding domain. 465–472 (DDMGLGKT) is an ATP binding site. Positions 485 to 523 (GQEMSEGKDESSDSDSEDDKNKKRKSVTGWKSKGRKDTR) are disordered. A compositionally biased stretch (basic residues) spans 506-522 (KKRKSVTGWKSKGRKDT). A DEAH box motif is present at residues 603 to 606 (DEAH). In terms of domain architecture, Helicase C-terminal spans 891 to 1056 (KINMVIQILK…SSKLTIDDLK (166 aa)).

Belongs to the SNF2/RAD54 helicase family.

The protein resides in the nucleus. Its function is as follows. DsDNA-dependent ATPase which acts as a transcription termination factor by coupling ATP hydrolysis with removal of RNA polymerase II from the DNA template. The chain is Transcription termination factor 2 (lds) from Drosophila melanogaster (Fruit fly).